The chain runs to 2499 residues: Probable polyketide synthase 22 (2499 aa).

In terms of domain architecture, Ketosynthase family 3 (KS3) spans 11-430 (DNQVAIVGLG…GSNACVLLSE (420 aa)). Residues Cys177, His316, and His354 each act as for beta-ketoacyl synthase activity in the active site. An acyl/malonyl transferases region spans residues 623-656 (GITPSIIVGHSLGEVASAFCSGMIDLETACFVIY). The For acyl/malonyl transferase activity role is filled by Ser633. The segment at 922–1044 (APINQLGNKN…SRILMKSLDV (123 aa)) is N-terminal hotdog fold. The PKS/mFAS DH domain maps to 922–1209 (APINQLGNKN…IASTLSTKSE (288 aa)). Catalysis depends on His956, which acts as the Proton acceptor; for dehydratase activity. The segment at 1059–1209 (NWSTLKREQL…IASTLSTKSE (151 aa)) is C-terminal hotdog fold. Asp1121 serves as the catalytic Proton donor; for dehydratase activity. One can recognise a Carrier domain in the interval 2414–2491 (EKEFSIRQDI…QIINIVTTKV (78 aa)). Residue Ser2451 is modified to O-(pantetheine 4'-phosphoryl)serine.

Pantetheine 4'-phosphate is required as a cofactor.

Probable polyketide synthase. This is Probable polyketide synthase 22 (pks22) from Dictyostelium discoideum (Social amoeba).